The primary structure comprises 619 residues: E3 ubiquitin-protein ligase DTX4 (619 aa).

WWE domains follow at residues 1 to 78 and 79 to 155; these read MLLA…PVRR and NYYD…RVRR. Disordered stretches follow at residues 238 to 281 and 358 to 389; these read KPLD…PGPN and PPPV…KGKT. Over residues 261 to 273 the composition is skewed to polar residues; it reads QASSMPTGTTMGS. The span at 378–387 shows a compositional bias: basic residues; that stretch reads KTTKKQAKKG. The RING-type; atypical zinc-finger motif lies at 409–468; sequence CTICMERLTAPSGYKGPQPTVKPDLVGKLSRCGHVYHIYCLVAMYNNGNKDGSLQCPTCK.

The protein belongs to the Deltex family. In terms of assembly, interacts with NLRP4.

The protein localises to the cytoplasm. The enzyme catalyses S-ubiquitinyl-[E2 ubiquitin-conjugating enzyme]-L-cysteine + [acceptor protein]-L-lysine = [E2 ubiquitin-conjugating enzyme]-L-cysteine + N(6)-ubiquitinyl-[acceptor protein]-L-lysine.. Its pathway is protein modification; protein ubiquitination. Regulator of Notch signaling, a signaling pathway involved in cell-cell communications that regulates a broad spectrum of cell-fate determinations. Functions as a ubiquitin ligase protein in vivo, mediating 'Lys48'-linked polyubiquitination and promoting degradation of TBK1, targeting to TBK1 requires interaction with NLRP4. This Homo sapiens (Human) protein is E3 ubiquitin-protein ligase DTX4 (DTX4).